We begin with the raw amino-acid sequence, 254 residues long: Serotonin N-acetyltransferase 1, chloroplastic (254 aa).

The N-terminal 83 residues, 1-83 (MASAASASAS…NSTETVEPPS (83 aa)), are a transit peptide targeting the chloroplast. In terms of domain architecture, N-acetyltransferase spans 119-254 (VNVYDLQALC…IKGMFWYPRF (136 aa)).

It is found in the plastid. The protein resides in the chloroplast. It localises to the nucleus. The enzyme catalyses a 2-arylethylamine + acetyl-CoA = an N-acetyl-2-arylethylamine + CoA + H(+). It participates in aromatic compound metabolism; melatonin biosynthesis; melatonin from serotonin: step 1/2. Catalyzes the N-acetylation of serotonin into N-acetylserotonin, the penultimate step in the synthesis of melatonin. Catalyzes in vitro the N-acetylation of tryptamine to produce N-acetyltryptamine, 5-methoxytryptamine to produce melatonin and tyramine to produce N-acetyltyramine. Acetyltransferase required for geminivirus infection and systemic spread. The chain is Serotonin N-acetyltransferase 1, chloroplastic from Oryza sativa subsp. indica (Rice).